The chain runs to 111 residues: Resistin-like alpha (111 aa).

The N-terminal stretch at 1–23 (MKTATCSLLICVFLLQLMVPVNT) is a signal peptide. 5 disulfides stabilise this stretch: C55–C108, C67–C107, C76–C93, C78–C95, and C82–C97.

Belongs to the resistin/FIZZ family. In terms of assembly, monomer. As to expression, highest levels in adipose tissue.

Its subcellular location is the secreted. Functionally, probable hormone. Plays a role in pulmonary vascular remodeling. The polypeptide is Resistin-like alpha (Retnla) (Rattus norvegicus (Rat)).